The following is a 251-amino-acid chain: uncharacterized protein (251 aa).

Belongs to the chlamydial CPn_0206/CT_203/TC_0475 family.

This is an uncharacterized protein from Chlamydia trachomatis serovar D (strain ATCC VR-885 / DSM 19411 / UW-3/Cx).